Reading from the N-terminus, the 288-residue chain is Phosphatidylglycerol--prolipoprotein diacylglyceryl transferase (288 aa).

4 consecutive transmembrane segments (helical) span residues 18–38, 68–88, 107–127, and 135–155; these read WSLR…LACL, FFIY…VIFY, GLSS…FSWI, and LTFL…AFFI. Position 156 (Arg-156) interacts with a 1,2-diacyl-sn-glycero-3-phospho-(1'-sn-glycerol). Helical transmembrane passes span 193–213, 222–242, and 256–276; these read VQLY…FLSY, GYVT…AEYV, and LTIG…LLII.

This sequence belongs to the Lgt family.

It is found in the cell inner membrane. It catalyses the reaction L-cysteinyl-[prolipoprotein] + a 1,2-diacyl-sn-glycero-3-phospho-(1'-sn-glycerol) = an S-1,2-diacyl-sn-glyceryl-L-cysteinyl-[prolipoprotein] + sn-glycerol 1-phosphate + H(+). The protein operates within protein modification; lipoprotein biosynthesis (diacylglyceryl transfer). In terms of biological role, catalyzes the transfer of the diacylglyceryl group from phosphatidylglycerol to the sulfhydryl group of the N-terminal cysteine of a prolipoprotein, the first step in the formation of mature lipoproteins. The protein is Phosphatidylglycerol--prolipoprotein diacylglyceryl transferase of Chlamydia pneumoniae (Chlamydophila pneumoniae).